The sequence spans 56 residues: Frontoxin I (56 aa).

4 disulfide bridges follow: cysteine 3–cysteine 22, cysteine 17–cysteine 39, cysteine 41–cysteine 52, and cysteine 53–cysteine 56.

The protein belongs to the three-finger toxin family. Short-chain subfamily. Type I alpha-neurotoxin sub-subfamily. In terms of tissue distribution, expressed by the venom gland.

Its subcellular location is the secreted. In terms of biological role, binds to muscle nicotinic acetylcholine receptor (nAChR) and inhibit acetylcholine from binding to the receptor, thereby impairing neuromuscular transmission. This is Frontoxin I from Micrurus frontalis (Coral snake).